The following is a 434-amino-acid chain: Protein maelstrom homolog (434 aa).

A DNA-binding region (HMG box) is located at residues 4–73 (RRGSRNAYYF…AQGKDAGPWE (70 aa)). The segment at 357–387 (SHFSSSNQEQRSNTPTGDYPSGVKISGQSSS) is disordered. The span at 363-372 (NQEQRSNTPT) shows a compositional bias: polar residues.

It belongs to the maelstrom family. Interacts with SMARCB1, SIN3B and DDX4. Interacts with piRNA-associated proteins TDRD1, PIWIL1 and PIWIL2. Interacts with TEX19.

It is found in the cytoplasm. The protein localises to the nucleus. Its function is as follows. Plays a central role during spermatogenesis by repressing transposable elements and preventing their mobilization, which is essential for the germline integrity. Acts via the piRNA metabolic process, which mediates the repression of transposable elements during meiosis by forming complexes composed of piRNAs and Piwi proteins and governs the methylation and subsequent repression of transposons. Its association with piP-bodies suggests a participation in the secondary piRNAs metabolic process. Required for the localization of germ-cell factors to the meiotic nuage. This is Protein maelstrom homolog (MAEL) from Sus scrofa (Pig).